We begin with the raw amino-acid sequence, 214 residues long: Ribosomal RNA small subunit methyltransferase G (214 aa).

S-adenosyl-L-methionine is bound by residues Gly81, Met86, 132 to 133, and Arg147; that span reads AE.

This sequence belongs to the methyltransferase superfamily. RNA methyltransferase RsmG family.

It localises to the cytoplasm. It catalyses the reaction guanosine(527) in 16S rRNA + S-adenosyl-L-methionine = N(7)-methylguanosine(527) in 16S rRNA + S-adenosyl-L-homocysteine. Functionally, specifically methylates the N7 position of guanine in position 527 of 16S rRNA. This Pseudomonas syringae pv. syringae (strain B728a) protein is Ribosomal RNA small subunit methyltransferase G.